The sequence spans 429 residues: Adenylosuccinate synthetase (429 aa).

GTP-binding positions include 12-18 (GDEGKGK) and 40-42 (GHT). Aspartate 13 (proton acceptor) is an active-site residue. Mg(2+) is bound by residues aspartate 13 and glycine 40. Residues 13-16 (DEGK), 38-41 (NAGH), threonine 128, arginine 142, glutamine 223, threonine 238, and arginine 302 contribute to the IMP site. Residue histidine 41 is the Proton donor of the active site. Residue 298–304 (TVTGRPR) coordinates substrate. Residues arginine 304, 330–332 (LLD), and 412–414 (SVG) contribute to the GTP site.

Belongs to the adenylosuccinate synthetase family. As to quaternary structure, homodimer. Mg(2+) is required as a cofactor.

It localises to the cytoplasm. It catalyses the reaction IMP + L-aspartate + GTP = N(6)-(1,2-dicarboxyethyl)-AMP + GDP + phosphate + 2 H(+). It functions in the pathway purine metabolism; AMP biosynthesis via de novo pathway; AMP from IMP: step 1/2. Plays an important role in the de novo pathway of purine nucleotide biosynthesis. Catalyzes the first committed step in the biosynthesis of AMP from IMP. In Lactobacillus acidophilus (strain ATCC 700396 / NCK56 / N2 / NCFM), this protein is Adenylosuccinate synthetase.